The following is a 388-amino-acid chain: S-adenosylmethionine synthase (388 aa).

H16 serves as a coordination point for ATP. Mg(2+) is bound at residue D18. E44 lines the K(+) pocket. E57 and Q100 together coordinate L-methionine. Positions 100-110 are flexible loop; that stretch reads QSPEIAQGVDR. Residues 165–167, D240, 246–247, A263, and K267 contribute to the ATP site; these read DAK and RK. D240 is an L-methionine binding site. Residue K271 participates in L-methionine binding.

The protein belongs to the AdoMet synthase family. In terms of assembly, homotetramer; dimer of dimers. Mg(2+) serves as cofactor. It depends on K(+) as a cofactor.

It is found in the cytoplasm. It catalyses the reaction L-methionine + ATP + H2O = S-adenosyl-L-methionine + phosphate + diphosphate. It functions in the pathway amino-acid biosynthesis; S-adenosyl-L-methionine biosynthesis; S-adenosyl-L-methionine from L-methionine: step 1/1. Catalyzes the formation of S-adenosylmethionine (AdoMet) from methionine and ATP. The overall synthetic reaction is composed of two sequential steps, AdoMet formation and the subsequent tripolyphosphate hydrolysis which occurs prior to release of AdoMet from the enzyme. This Acinetobacter baumannii (strain ACICU) protein is S-adenosylmethionine synthase.